We begin with the raw amino-acid sequence, 91 residues long: ATP-dependent Clp protease adapter protein ClpS (91 aa).

It belongs to the ClpS family. As to quaternary structure, binds to the N-terminal domain of the chaperone ClpA.

Its function is as follows. Involved in the modulation of the specificity of the ClpAP-mediated ATP-dependent protein degradation. The protein is ATP-dependent Clp protease adapter protein ClpS of Helicobacter pylori (strain ATCC 700392 / 26695) (Campylobacter pylori).